A 182-amino-acid chain; its full sequence is Pyruvoyl-dependent arginine decarboxylase (182 aa).

Residue S44 is modified to Pyruvic acid (Ser).

Belongs to the PdaD family. The cofactor is pyruvate.

The catalysed reaction is L-arginine + H(+) = agmatine + CO2. The chain is Pyruvoyl-dependent arginine decarboxylase from Thermoplasma volcanium (strain ATCC 51530 / DSM 4299 / JCM 9571 / NBRC 15438 / GSS1).